The sequence spans 515 residues: Zinc-binding protein AdcA (515 aa).

An N-terminal signal peptide occupies residues 1 to 28; it reads MKKKILLMMSLISVFFAWQLTQAKQVLA. Position 66 (histidine 66) interacts with Zn(2+). Residues 125–148 form a disordered region; it reads DHHHEDADKKHEHNKHSEEGHNHA. A his-rich loop region spans residues 129-148; the sequence is EDADKKHEHNKHSEEGHNHA. Zn(2+) is bound by residues histidine 152, histidine 216, and glutamate 291.

This sequence belongs to the bacterial solute-binding protein 9 family.

In terms of biological role, part of the ATP-binding cassette (ABC) transport system AdcABC involved in zinc import. Binds zinc with high affinity and specificity and delivers it to the membrane permease for translocation into the cytoplasm. This chain is Zinc-binding protein AdcA (adcA), found in Streptococcus pyogenes serotype M1.